The chain runs to 185 residues: Peptide deformylase (185 aa).

Cys98 and His140 together coordinate Fe cation. Glu141 is an active-site residue. His144 provides a ligand contact to Fe cation.

It belongs to the polypeptide deformylase family. It depends on Fe(2+) as a cofactor.

It carries out the reaction N-terminal N-formyl-L-methionyl-[peptide] + H2O = N-terminal L-methionyl-[peptide] + formate. Functionally, removes the formyl group from the N-terminal Met of newly synthesized proteins. Requires at least a dipeptide for an efficient rate of reaction. N-terminal L-methionine is a prerequisite for activity but the enzyme has broad specificity at other positions. In Parabacteroides distasonis (strain ATCC 8503 / DSM 20701 / CIP 104284 / JCM 5825 / NCTC 11152), this protein is Peptide deformylase.